Reading from the N-terminus, the 287-residue chain is Energy-coupling factor transporter ATP-binding protein EcfA2 (287 aa).

The ABC transporter domain maps to 3 to 246 (VKFSQVSYVY…TNYVNQLHLD (244 aa)). Position 40 to 47 (40 to 47 (GQTGSGKS)) interacts with ATP.

Belongs to the ABC transporter superfamily. Energy-coupling factor EcfA family. In terms of assembly, forms a stable energy-coupling factor (ECF) transporter complex composed of 2 membrane-embedded substrate-binding proteins (S component), 2 ATP-binding proteins (A component) and 2 transmembrane proteins (T component).

The protein resides in the cell membrane. In terms of biological role, ATP-binding (A) component of a common energy-coupling factor (ECF) ABC-transporter complex. Unlike classic ABC transporters this ECF transporter provides the energy necessary to transport a number of different substrates. The protein is Energy-coupling factor transporter ATP-binding protein EcfA2 of Staphylococcus saprophyticus subsp. saprophyticus (strain ATCC 15305 / DSM 20229 / NCIMB 8711 / NCTC 7292 / S-41).